A 469-amino-acid polypeptide reads, in one-letter code: UDP-N-acetylmuramoylalanine--D-glutamate ligase (469 aa).

121-127 (GTNGKST) is a binding site for ATP.

This sequence belongs to the MurCDEF family.

It localises to the cytoplasm. It catalyses the reaction UDP-N-acetyl-alpha-D-muramoyl-L-alanine + D-glutamate + ATP = UDP-N-acetyl-alpha-D-muramoyl-L-alanyl-D-glutamate + ADP + phosphate + H(+). Its pathway is cell wall biogenesis; peptidoglycan biosynthesis. Its function is as follows. Cell wall formation. Catalyzes the addition of glutamate to the nucleotide precursor UDP-N-acetylmuramoyl-L-alanine (UMA). This chain is UDP-N-acetylmuramoylalanine--D-glutamate ligase, found in Rhodopseudomonas palustris (strain ATCC BAA-98 / CGA009).